Here is a 620-residue protein sequence, read N- to C-terminus: Cilia- and flagella-associated protein 52 (620 aa).

WD repeat units follow at residues 62–106, 109–150, 156–195, 203–242, 288–327, 330–369, 372–411, 415–454, 459–498, 500–539, 543–582, and 585–620; these read GHSN…LMAR, LHKG…AICG, LNVGNATSVVFSQCHDEMFVTAGNGTIRVWELDLPNRKIW, QMKRIVMSISMASDDSFFYLGTTTGDILKMNPRTKLLADT, QLQGGITSISLRGEGHQFFVGTEESHIYRVNFTDFKETLV, CHFEAVEDVVFPFGTAELFATCAKKDIRVWHTLSNRELLR, VPNMTCHGIDFMRDGKSLISAWDDGKIRAFAPETGRLMYV, AHRIGVTAVATTSDCTRVISGGGEGEVRVWQIGHQTQKLE, EHKSSVSCIRVKKNNEECVTASTDGTCIIWDLVRLRRNQM, LANTLFQCVCYHPEEFQIITSGTDRKIAYWEVFDGSGIRE, SLSGSINGMDITPEGVHFVTGGNDHLVKVWDYNEGEVTHV, and GHSGNITRVRISPGNEYIVSVSADGAILRWKYPFPS.

The protein belongs to the CFAP52 family. As to quaternary structure, microtubule inner protein component of sperm flagellar doublet microtubules. Interacts with BRCA2. Interacts with the CCT chaperonin complex. Interacts with HSP70. Interacts with AK8. Interacts with CFAP45. Interacts with DNAI1. Interacts with IQDC. Expressed in respiratory cells and sperm (at protein level).

Its subcellular location is the cytoplasm. It is found in the cytoskeleton. The protein localises to the cilium axoneme. It localises to the flagellum axoneme. Functionally, microtubule inner protein (MIP) part of the dynein-decorated doublet microtubules (DMTs) in cilia axoneme. Important for proper ciliary and flagellar beating. May act in cooperation with CFAP45 and axonemal dynein subunit DNAH11. May play a role in cell growth and/or survival. This chain is Cilia- and flagella-associated protein 52 (CFAP52), found in Sus scrofa (Pig).